Reading from the N-terminus, the 201-residue chain is Recombination protein RecR (201 aa).

The segment at 57–72 (CADCRTFTEQDVCNIC) adopts a C4-type zinc-finger fold. In terms of domain architecture, Toprim spans 81–176 (GQICVVESPA…EASRIAHGVP (96 aa)).

Belongs to the RecR family.

May play a role in DNA repair. It seems to be involved in an RecBC-independent recombinational process of DNA repair. It may act with RecF and RecO. The chain is Recombination protein RecR from Salmonella choleraesuis (strain SC-B67).